The sequence spans 434 residues: 3-phosphoshikimate 1-carboxyvinyltransferase (434 aa).

3 residues coordinate 3-phosphoshikimate: lysine 22, serine 23, and arginine 27. Lysine 22 contacts phosphoenolpyruvate. Phosphoenolpyruvate-binding residues include glycine 93 and arginine 121. 3-phosphoshikimate-binding residues include serine 168, serine 169, glutamine 170, serine 199, aspartate 320, and lysine 347. Phosphoenolpyruvate is bound at residue glutamine 170. Aspartate 320 serves as the catalytic Proton acceptor. Residues arginine 351, arginine 394, and lysine 419 each contribute to the phosphoenolpyruvate site.

The protein belongs to the EPSP synthase family. Monomer.

It is found in the cytoplasm. The enzyme catalyses 3-phosphoshikimate + phosphoenolpyruvate = 5-O-(1-carboxyvinyl)-3-phosphoshikimate + phosphate. It participates in metabolic intermediate biosynthesis; chorismate biosynthesis; chorismate from D-erythrose 4-phosphate and phosphoenolpyruvate: step 6/7. In terms of biological role, catalyzes the transfer of the enolpyruvyl moiety of phosphoenolpyruvate (PEP) to the 5-hydroxyl of shikimate-3-phosphate (S3P) to produce enolpyruvyl shikimate-3-phosphate and inorganic phosphate. The chain is 3-phosphoshikimate 1-carboxyvinyltransferase from Burkholderia lata (strain ATCC 17760 / DSM 23089 / LMG 22485 / NCIMB 9086 / R18194 / 383).